We begin with the raw amino-acid sequence, 252 residues long: Octanoyltransferase (252 aa).

One can recognise a BPL/LPL catalytic domain in the interval 56-237 (ADTGDEIWLV…RLIANLDGAS (182 aa)). Substrate contacts are provided by residues 96 to 103 (RGGQITYH), 168 to 170 (ALG), and 181 to 183 (GLS). C199 functions as the Acyl-thioester intermediate in the catalytic mechanism.

It belongs to the LipB family.

The protein localises to the cytoplasm. It catalyses the reaction octanoyl-[ACP] + L-lysyl-[protein] = N(6)-octanoyl-L-lysyl-[protein] + holo-[ACP] + H(+). It functions in the pathway protein modification; protein lipoylation via endogenous pathway; protein N(6)-(lipoyl)lysine from octanoyl-[acyl-carrier-protein]: step 1/2. Catalyzes the transfer of endogenously produced octanoic acid from octanoyl-acyl-carrier-protein onto the lipoyl domains of lipoate-dependent enzymes. Lipoyl-ACP can also act as a substrate although octanoyl-ACP is likely to be the physiological substrate. This is Octanoyltransferase from Burkholderia lata (strain ATCC 17760 / DSM 23089 / LMG 22485 / NCIMB 9086 / R18194 / 383).